The following is a 147-amino-acid chain: Small ribosomal subunit protein bS16 (147 aa).

A disordered region spans residues Ala-89–Ser-147. Positions Lys-97–Ala-118 are enriched in basic and acidic residues. A compositionally biased stretch (low complexity) spans Lys-119–Ser-147.

This sequence belongs to the bacterial ribosomal protein bS16 family.

The polypeptide is Small ribosomal subunit protein bS16 (Hyphomonas neptunium (strain ATCC 15444)).